Reading from the N-terminus, the 262-residue chain is MSTSTHEMSPAAARAAFREGVAVPTTGYSDGYAQANLMVLPKEYAFDFLLFAQRNPKPCPILGVLEPGQLNSELLPGGDIRTDIPKYRVYRDGELAGEYPDVTEFWRDDLVSFLIGCSFTFEGALLDNGIPVAHIEQGRNVPMYKTSIPTARAGRFHGPLVVSMRPIPASQIADAVRVTSRYPAVHGAPVHVGDPAAIGISDLASPDYGDAVEIPDGHIPVFWACGVTPQAAVMETKPSLAIAHAPGHMLVTDARDLQYQVP.

The protein belongs to the D-glutamate cyclase family.

The protein is Putative hydro-lyase cu1581 of Corynebacterium urealyticum (strain ATCC 43042 / DSM 7109).